Reading from the N-terminus, the 212-residue chain is Thymidylate kinase (212 aa).

Residue 11 to 18 (GLEGAGKT) participates in ATP binding.

This sequence belongs to the thymidylate kinase family.

The catalysed reaction is dTMP + ATP = dTDP + ADP. Phosphorylation of dTMP to form dTDP in both de novo and salvage pathways of dTTP synthesis. This is Thymidylate kinase from Buchnera aphidicola subsp. Schizaphis graminum (strain Sg).